The sequence spans 593 residues: Elongation factor 4 (593 aa).

The region spanning 2 to 181 (DKIRNFCIIA…AVIERIPHPQ (180 aa)) is the tr-type G domain. Residues 14–19 (DHGKST) and 128–131 (NKCD) each bind GTP.

The protein belongs to the TRAFAC class translation factor GTPase superfamily. Classic translation factor GTPase family. LepA subfamily.

The protein resides in the cell inner membrane. It catalyses the reaction GTP + H2O = GDP + phosphate + H(+). In terms of biological role, required for accurate and efficient protein synthesis under certain stress conditions. May act as a fidelity factor of the translation reaction, by catalyzing a one-codon backward translocation of tRNAs on improperly translocated ribosomes. Back-translocation proceeds from a post-translocation (POST) complex to a pre-translocation (PRE) complex, thus giving elongation factor G a second chance to translocate the tRNAs correctly. Binds to ribosomes in a GTP-dependent manner. The sequence is that of Elongation factor 4 from Bacteroides fragilis (strain ATCC 25285 / DSM 2151 / CCUG 4856 / JCM 11019 / LMG 10263 / NCTC 9343 / Onslow / VPI 2553 / EN-2).